A 452-amino-acid polypeptide reads, in one-letter code: MMEKVTKLALTSRVMVLVVQLLANFATPDHKPDVFRMPQSEGPKKNGPFPWLDELVLQSLSGLRHWDGEYFLHIASNLYTYENTLAFYPLYPVVVRHVAQACQHLGIPLSRDALILLVAVALNVLIFCKTANVLYKLTQRMFNDHNKSWNAALIFCFNPASIFFSAAYSETFFAFASFSLMLECMRSEKDFRTFRLGAALTGCFVCRSNGLLTLGFPLYFLARHILLSTGSVQRCWQLFKMGLAMLVALGILHTYYFYIYRLYCLPDVKVQHAQHVVDYAKERSFLISGQASVGSPWCGYTLPFPYTYVQSHYWDVGFLRYYKWKQLPNFLLALPMLLFMHWHCYDYIRKLVANTWSKISPSEYQGILKEHISFPFVLHAAVLTLVCTLYVHIQVSTRLLASATPVFYWFAADYMPNTFQLSFRSKAGVLFIWCLTYSLVGTVLFSNNYPWT.

The Cytoplasmic segment spans residues 1–7; the sequence is MMEKVTK. Residues 8–28 form a helical membrane-spanning segment; the sequence is LALTSRVMVLVVQLLANFATP. The Lumenal portion of the chain corresponds to 29–113; sequence DHKPDVFRMP…HLGIPLSRDA (85 aa). Residues 114-134 form a helical membrane-spanning segment; the sequence is LILLVAVALNVLIFCKTANVL. Topologically, residues 135–161 are cytoplasmic; sequence YKLTQRMFNDHNKSWNAALIFCFNPAS. Residues 162–182 traverse the membrane as a helical segment; the sequence is IFFSAAYSETFFAFASFSLML. The Lumenal portion of the chain corresponds to 183–209; the sequence is ECMRSEKDFRTFRLGAALTGCFVCRSN. The chain crosses the membrane as a helical span at residues 210–230; it reads GLLTLGFPLYFLARHILLSTG. Topologically, residues 231-238 are cytoplasmic; the sequence is SVQRCWQL. Residues 239–259 form a helical membrane-spanning segment; it reads FKMGLAMLVALGILHTYYFYI. Over 260 to 284 the chain is Lumenal; the sequence is YRLYCLPDVKVQHAQHVVDYAKERS. The chain crosses the membrane as a helical span at residues 285–305; sequence FLISGQASVGSPWCGYTLPFP. Residues 306 to 327 are Cytoplasmic-facing; the sequence is YTYVQSHYWDVGFLRYYKWKQL. Residues 328–348 traverse the membrane as a helical segment; sequence PNFLLALPMLLFMHWHCYDYI. Topologically, residues 349–370 are lumenal; that stretch reads RKLVANTWSKISPSEYQGILKE. Residues 371-391 form a helical membrane-spanning segment; sequence HISFPFVLHAAVLTLVCTLYV. Over 392-398 the chain is Cytoplasmic; that stretch reads HIQVSTR. The helical transmembrane segment at 399–419 threads the bilayer; the sequence is LLASATPVFYWFAADYMPNTF. Topologically, residues 420–426 are lumenal; the sequence is QLSFRSK. Residues 427–447 traverse the membrane as a helical segment; that stretch reads AGVLFIWCLTYSLVGTVLFSN. At 448 to 452 the chain is on the cytoplasmic side; that stretch reads NYPWT.

This sequence belongs to the PIGV family.

Its subcellular location is the endoplasmic reticulum membrane. Its pathway is glycolipid biosynthesis; glycosylphosphatidylinositol-anchor biosynthesis. Functionally, mannosyltransferase involved in glycosylphosphatidylinositol-anchor biosynthesis. Transfers the second mannose to the glycosylphosphatidylinositol during GPI precursor assembly. Required for the GPI-mediated endoplasmic reticulum exit and proper targeting to the cell surface of chp. Required for GPI-mediated membrane attachment of chp, qsm and Cont. Essential for microvillar stability in the rhabdomere. The polypeptide is GPI mannosyltransferase 2 (Drosophila pseudoobscura pseudoobscura (Fruit fly)).